Reading from the N-terminus, the 198-residue chain is Lipoprotein signal peptidase (198 aa).

The segment at 1 to 34 is disordered; sequence MDDERVSQDPTAENETDAEDRNDDDPSGSAPPQP. Residues 12 to 26 are compositionally biased toward acidic residues; that stretch reads AENETDAEDRNDDDP. 3 helical membrane passes run 42–62, 92–112, and 120–140; these read LLFVIAGVVLATDLLTKILAV, MATGMTWLLTLVAVGVVIGVV, and SPWWALGLGLVLGGALGNLVD. Catalysis depends on residues Asp-155 and Asp-169. The chain crosses the membrane as a helical span at residues 167–187; it reads VADSGIVCGAILLVVLTLIGL.

It belongs to the peptidase A8 family.

It is found in the cell membrane. The catalysed reaction is Release of signal peptides from bacterial membrane prolipoproteins. Hydrolyzes -Xaa-Yaa-Zaa-|-(S,diacylglyceryl)Cys-, in which Xaa is hydrophobic (preferably Leu), and Yaa (Ala or Ser) and Zaa (Gly or Ala) have small, neutral side chains.. It functions in the pathway protein modification; lipoprotein biosynthesis (signal peptide cleavage). Functionally, this protein specifically catalyzes the removal of signal peptides from prolipoproteins. In Rhodococcus jostii (strain RHA1), this protein is Lipoprotein signal peptidase.